The following is a 259-amino-acid chain: ATP synthase subunit a 1 (259 aa).

5 consecutive transmembrane segments (helical) span residues 30–50 (TLHVDTLFFSVFLGAVFLFFF), 90–110 (LIAPLALSIFAWVFLMNAMDL), 135–155 (DLNATFGMSISVFFLIIFYSL), 209–229 (LIFILIALLPWWVQPALSFPW), and 230–250 (AVFHILIITLQAFIFMVLTIV).

The protein belongs to the ATPase A chain family. In terms of assembly, F-type ATPases have 2 components, CF(1) - the catalytic core - and CF(0) - the membrane proton channel. CF(1) has five subunits: alpha(3), beta(3), gamma(1), delta(1), epsilon(1). CF(0) has three main subunits: a(1), b(2) and c(9-12). The alpha and beta chains form an alternating ring which encloses part of the gamma chain. CF(1) is attached to CF(0) by a central stalk formed by the gamma and epsilon chains, while a peripheral stalk is formed by the delta and b chains.

It is found in the cell inner membrane. Key component of the proton channel; it plays a direct role in the translocation of protons across the membrane. This is ATP synthase subunit a 1 from Methylococcus capsulatus (strain ATCC 33009 / NCIMB 11132 / Bath).